Here is a 334-residue protein sequence, read N- to C-terminus: tRNA N6-adenosine threonylcarbamoyltransferase (334 aa).

Residues histidine 111 and histidine 115 each coordinate Fe cation. Residues 134–138 (IVSGG), aspartate 167, glycine 180, aspartate 184, and asparagine 272 contribute to the substrate site. Aspartate 300 is a Fe cation binding site.

It belongs to the KAE1 / TsaD family. Fe(2+) is required as a cofactor.

Its subcellular location is the cytoplasm. It carries out the reaction L-threonylcarbamoyladenylate + adenosine(37) in tRNA = N(6)-L-threonylcarbamoyladenosine(37) in tRNA + AMP + H(+). Required for the formation of a threonylcarbamoyl group on adenosine at position 37 (t(6)A37) in tRNAs that read codons beginning with adenine. Is involved in the transfer of the threonylcarbamoyl moiety of threonylcarbamoyl-AMP (TC-AMP) to the N6 group of A37, together with TsaE and TsaB. TsaD likely plays a direct catalytic role in this reaction. The protein is tRNA N6-adenosine threonylcarbamoyltransferase of Dictyoglomus turgidum (strain DSM 6724 / Z-1310).